The sequence spans 129 residues: Small ribosomal subunit protein uS11 (129 aa).

Belongs to the universal ribosomal protein uS11 family. Part of the 30S ribosomal subunit. Interacts with proteins S7 and S18. Binds to IF-3.

In terms of biological role, located on the platform of the 30S subunit, it bridges several disparate RNA helices of the 16S rRNA. Forms part of the Shine-Dalgarno cleft in the 70S ribosome. In Bartonella henselae (strain ATCC 49882 / DSM 28221 / CCUG 30454 / Houston 1) (Rochalimaea henselae), this protein is Small ribosomal subunit protein uS11.